The sequence spans 121 residues: Large ribosomal subunit protein uL14c (121 aa).

Belongs to the universal ribosomal protein uL14 family. As to quaternary structure, part of the 50S ribosomal subunit.

The protein localises to the plastid. The protein resides in the chloroplast. Binds to 23S rRNA. The sequence is that of Large ribosomal subunit protein uL14c from Pelargonium hortorum (Common geranium).